A 202-amino-acid polypeptide reads, in one-letter code: MFEELDAEDGGEEQEMPMNVPEFGGGGEDIDDILGDAPDLPDDEYSNSVPQGAADGSIENDERRMRNDGAGSTNEDDEEPIEPTYLGDAIDSLMMHWCQLLTNVSVKAPVPPPSTLNHVKEVAEVCSKHFRDASVDVNNEFTRLGVQWEMEQPYSQYAIEEENLDEAIERQETIIAAAREMLNSRIQIYNEAHPNAGKHFTT.

2 stretches are compositionally biased toward acidic residues: residues 1-15 and 28-45; these read MFEE…EEQE and EDID…DDEY. A disordered region spans residues 1–83; that stretch reads MFEELDAEDG…NEDDEEPIEP (83 aa). Residues 159–184 are a coiled coil; it reads IEEENLDEAIERQETIIAAAREMLNS.

Interacts with mdt-6 and mdt-30. In terms of tissue distribution, ubiquitously expressed in tissues including epidermal, intestinal, pharyngeal and uterine, and is also expressed in vulval muscle cells and gut granules.

The protein localises to the nucleus. It localises to the cytoplasm. Functionally, plays a role in normal growth and development. The chain is Coiled-coil domain-containing protein mdt-28 from Caenorhabditis elegans.